A 143-amino-acid polypeptide reads, in one-letter code: Small ribosomal subunit protein bS6 (143 aa).

The disordered stretch occupies residues 100–143 (QSFIMKSKDDKGDKPERRRRDDDESGDVGVSNDSDNDGGNAEAA). Residues 105–121 (KSKDDKGDKPERRRRDD) are compositionally biased toward basic and acidic residues. The segment covering 126–143 (DVGVSNDSDNDGGNAEAA) has biased composition (low complexity).

It belongs to the bacterial ribosomal protein bS6 family.

Its function is as follows. Binds together with bS18 to 16S ribosomal RNA. This is Small ribosomal subunit protein bS6 from Xylella fastidiosa (strain M12).